A 587-amino-acid polypeptide reads, in one-letter code: Probable pectinesterase/pectinesterase inhibitor 61 (587 aa).

The disordered stretch occupies residues 1–23; the sequence is MGYDRLGPSGPSNPNQKDPATSL. Positions 10 to 19 are enriched in polar residues; that stretch reads GPSNPNQKDP. Residues 35 to 55 form a helical membrane-spanning segment; sequence ILFTLAVLVVGVVCFGIFAGI. Positions 69 to 223 are pectinesterase inhibitor 61; it reads RKPTQAISRT…SEMVSNCLAI (155 aa). Residues 273–571 form a pectinesterase 61 region; sequence DITVSKDGSG…FTVAQFISGS (299 aa). Substrate contacts are provided by T349 and Q379. D402 functions as the Proton donor; for pectinesterase activity in the catalytic mechanism. C416 and C436 are oxidised to a cystine. D423 serves as the catalytic Nucleophile; for pectinesterase activity. Substrate-binding residues include R491 and W493.

This sequence in the N-terminal section; belongs to the PMEI family. The protein in the C-terminal section; belongs to the pectinesterase family. In terms of tissue distribution, expressed in siliques, floral stems and rosettes leaves.

Its subcellular location is the membrane. It catalyses the reaction [(1-&gt;4)-alpha-D-galacturonosyl methyl ester](n) + n H2O = [(1-&gt;4)-alpha-D-galacturonosyl](n) + n methanol + n H(+). It participates in glycan metabolism; pectin degradation; 2-dehydro-3-deoxy-D-gluconate from pectin: step 1/5. Its function is as follows. Acts in the modification of cell walls via demethylesterification of cell wall pectin. The polypeptide is Probable pectinesterase/pectinesterase inhibitor 61 (PME61) (Arabidopsis thaliana (Mouse-ear cress)).